The sequence spans 63 residues: Large ribosomal subunit protein bL32 (63 aa).

The interval 1–20 is disordered; that stretch reads MANPKAKMSKSRRDKRRAQF. Positions 7 to 18 are enriched in basic residues; sequence KMSKSRRDKRRA.

It belongs to the bacterial ribosomal protein bL32 family.

The protein is Large ribosomal subunit protein bL32 of Chlorobaculum tepidum (strain ATCC 49652 / DSM 12025 / NBRC 103806 / TLS) (Chlorobium tepidum).